Consider the following 207-residue polypeptide: Nudix hydrolase 4 (207 aa).

Residues Gly58 to Ile194 enclose the Nudix hydrolase domain. The Nudix box motif lies at Gly101–Gly122. Residues Glu116 and Glu120 each coordinate Mg(2+).

Belongs to the Nudix hydrolase family. Requires Mg(2+) as cofactor. Mn(2+) serves as cofactor. Expressed in roots, stems and leaves.

It carries out the reaction ADP-D-ribose + H2O = D-ribose 5-phosphate + AMP + 2 H(+). The catalysed reaction is NAD(+) + H2O = beta-nicotinamide D-ribonucleotide + AMP + 2 H(+). The enzyme catalyses NADH + H2O = reduced beta-nicotinamide D-ribonucleotide + AMP + 2 H(+). Its function is as follows. Probably mediates the hydrolysis of some nucleoside diphosphate derivatives. In vitro, it can use both NADH and ADP-ribose as substrates; however the relevance of such substrates in vivo is unclear. The sequence is that of Nudix hydrolase 4 (NUDT4) from Arabidopsis thaliana (Mouse-ear cress).